The chain runs to 963 residues: Protein NLP2 (963 aa).

The region spanning 635 to 716 (RRPGEKRRTK…IDSVQGVQGS (82 aa)) is the RWP-RK domain. The span at 734–755 (MSGTGTSFKNPNAQTENGVSAQ) shows a compositional bias: polar residues. The segment at 734–794 (MSGTGTSFKN…QSTNTGTTSN (61 aa)) is disordered. Residues 756 to 794 (GTAAAPKSPPSSSCSHSSGSSTCCSTGANQSTNTGTTSN) show a composition bias toward low complexity. Residues 862-945 (ASKVKATFGE…RTIKISVHEA (84 aa)) enclose the PB1 domain.

The protein resides in the nucleus. In terms of biological role, probable transcription factor. The sequence is that of Protein NLP2 (NLP2) from Arabidopsis thaliana (Mouse-ear cress).